Here is a 121-residue protein sequence, read N- to C-terminus: UPF0231 protein ESA_03214 (121 aa).

The protein belongs to the UPF0231 family.

The polypeptide is UPF0231 protein ESA_03214 (Cronobacter sakazakii (strain ATCC BAA-894) (Enterobacter sakazakii)).